Consider the following 311-residue polypeptide: Porphobilinogen deaminase (311 aa).

Cys-241 is modified (S-(dipyrrolylmethanemethyl)cysteine).

The protein belongs to the HMBS family. In terms of assembly, monomer. Dipyrromethane serves as cofactor.

The enzyme catalyses 4 porphobilinogen + H2O = hydroxymethylbilane + 4 NH4(+). Its pathway is porphyrin-containing compound metabolism; protoporphyrin-IX biosynthesis; coproporphyrinogen-III from 5-aminolevulinate: step 2/4. In terms of biological role, tetrapolymerization of the monopyrrole PBG into the hydroxymethylbilane pre-uroporphyrinogen in several discrete steps. The protein is Porphobilinogen deaminase of Campylobacter curvus (strain 525.92).